The sequence spans 460 residues: Orexin receptor type 2 (460 aa).

Residues 1–54 are Extracellular-facing; it reads MSSTKLEDSLPRRNWSSASELNETQEPFLNPTDYDDEEFLRYLWREYLHPKEYE. Residues asparagine 14 and asparagine 22 are each glycosylated (N-linked (GlcNAc...) asparagine). A required for response to orexin-A region spans residues 33 to 49; that stretch reads DYDDEEFLRYLWREYLH. The chain crosses the membrane as a helical span at residues 55–75; it reads WVLIAGYIIVFVVALIGNVLV. Residues 76 to 88 lie on the Cytoplasmic side of the membrane; the sequence is CVAVWKNHHMRTV. Residues 89–110 traverse the membrane as a helical segment; the sequence is TNYFIVNLSLADVLVTITCLPA. The Extracellular segment spans residues 111–127; that stretch reads TLVVDITETWFFGQSLC. Cysteine 127 and cysteine 210 are oxidised to a cystine. Residues 128–150 traverse the membrane as a helical segment; that stretch reads KVIPYLQTVSVSVSVLTLSCIAL. Residues 151-170 lie on the Cytoplasmic side of the membrane; sequence DRWYAICHPLMFKSTAKRAR. The chain crosses the membrane as a helical span at residues 171–191; it reads NSIVVIWIVSCIIMIPQAIVM. Over 192 to 222 the chain is Extracellular; the sequence is ERSSMLPGLANKTTLFTVCDERWGGEVYPKM. Residue asparagine 202 is glycosylated (N-linked (GlcNAc...) asparagine). The chain crosses the membrane as a helical span at residues 223–243; sequence YHICFFLVTYMAPLCLMVLAY. Topologically, residues 244–304 are cytoplasmic; the sequence is LQIFRKLWCR…QIRARRKTAR (61 aa). The helical transmembrane segment at 305-326 threads the bilayer; it reads MLMVVLLVFAICYLPISILNVL. Topologically, residues 327-342 are extracellular; sequence KRVFGMFTHTEDRETV. Residues 343–366 form a helical membrane-spanning segment; the sequence is YAWFTFSHWLVYANSAANPIIYNF. The Cytoplasmic portion of the chain corresponds to 367–460; it reads LSGKFREEFK…SSLLSTWLEV (94 aa).

This sequence belongs to the G-protein coupled receptor 1 family. In terms of tissue distribution, expressed in the brain in the cerebral cortex, septal nuclei, hippocampus, medial thalamic groups, dorsal and median raphe nuclei, and many hypothalamic nuclei including the tuberomammillary nucleus, dorsomedial hypothalamus, paraventricular hypothalamic nucleus, and ventral premammillary nucleus. Not detected in the spleen, lung, liver, skeletal muscle, kidney and testis. Orexin receptor mRNA expression has also been reported in the adrenal gland, enteric nervous system, and pancreas.

It localises to the cell membrane. In terms of biological role, nonselective, high-affinity receptor for both orexin-A and orexin-B neuropeptides. Triggers an increase in cytoplasmic Ca(2+) levels in response to orexin-A binding. In Rattus norvegicus (Rat), this protein is Orexin receptor type 2 (Hcrtr2).